The primary structure comprises 366 residues: Spermine synthase (366 aa).

An N-acetylalanine modification is found at alanine 2. The residue at position 57 (serine 57) is a Phosphoserine. The 241-residue stretch at 122–362 (RYWPTADGRL…ELWVFYTVWK (241 aa)) folds into the PABS domain. Residue glutamine 148 participates in S-adenosyl 3-(methylsulfanyl)propylamine binding. Tyrosine 177 and aspartate 201 together coordinate spermidine. S-adenosyl 3-(methylsulfanyl)propylamine-binding positions include glutamate 220 and 255–256 (DC). Aspartate 276 serves as the catalytic Proton acceptor. The spermidine site is built by tyrosine 351 and glutamate 353.

This sequence belongs to the spermidine/spermine synthase family. Homodimer. Dimerization is mediated through the N-terminal domain and seems to be required for activity as deletion of the N-terminal domain causes complete loss of activity.

It catalyses the reaction S-adenosyl 3-(methylsulfanyl)propylamine + spermidine = spermine + S-methyl-5'-thioadenosine + H(+). It participates in amine and polyamine biosynthesis; spermine biosynthesis; spermine from spermidine: step 1/1. Catalyzes the production of spermine from spermidine and decarboxylated S-adenosylmethionine (dcSAM). This is Spermine synthase from Homo sapiens (Human).